A 301-amino-acid polypeptide reads, in one-letter code: Probable splicing factor ECU05_1440 (301 aa).

Residues 1-70 enclose the RRM 1 domain; it reads MQIFIGKIPN…APISVERANG (70 aa). Disordered regions lie at residues 106-140 and 255-301; these read PPMRYESRSPGRYDPRFSDRYGGRSPEYRGDSFRM and SKDE…AEND. Basic and acidic residues-rich tracts occupy residues 110-140 and 255-270; these read YESRSPGRYDPRFSDRYGGRSPEYRGDSFRM and SKDEYKSRERESHMRS. Positions 182 to 255 constitute an RRM 2 domain; it reads LKVVFENIAP…HILKTRSYLS (74 aa).

This sequence belongs to the splicing factor SR family.

It is found in the nucleus. In terms of biological role, plays a role in splicing. The protein is Probable splicing factor ECU05_1440 of Encephalitozoon cuniculi (strain GB-M1) (Microsporidian parasite).